We begin with the raw amino-acid sequence, 502 residues long: 2,3-bisphosphoglycerate-independent phosphoglycerate mutase (502 aa).

Mn(2+) is bound by residues Asp-13 and Ser-63. Residue Ser-63 is the Phosphoserine intermediate of the active site. Residues His-117, 146-147 (RD), Arg-177, Arg-183, 251-254 (RSDR), and Lys-324 each bind substrate. Mn(2+) is bound by residues Asp-389, His-393, Asp-430, His-431, and His-448.

The protein belongs to the BPG-independent phosphoglycerate mutase family. In terms of assembly, monomer. It depends on Mn(2+) as a cofactor.

It catalyses the reaction (2R)-2-phosphoglycerate = (2R)-3-phosphoglycerate. Its pathway is carbohydrate degradation; glycolysis; pyruvate from D-glyceraldehyde 3-phosphate: step 3/5. Catalyzes the interconversion of 2-phosphoglycerate and 3-phosphoglycerate. The protein is 2,3-bisphosphoglycerate-independent phosphoglycerate mutase of Ureaplasma urealyticum serovar 10 (strain ATCC 33699 / Western).